The primary structure comprises 260 residues: MKPIDLQAENSTETVGRSLRRRPLARKKLSDMVEEELEQMIRRQEFAQGEQLPSERELMEFFNVGRPSVREALAALKRKGLVQINNGERARVSMPSADTIIGELSGMAKDFLTQPGGITHFEQLRLFFESSLVRYAAEFATDEQVESLSKALEINSQSLSDNALFIRSDVDFHRVLAEIPGNPIFMAIHVALLDWLIAARPKVSDAELYEHNNVSYRQHIAIVDAIRRHDPDEADRALQSHLNSVSATWHAFGQGSKKKK.

The 69-residue stretch at 27–95 (KKLSDMVEEE…NGERARVSMP (69 aa)) folds into the HTH gntR-type domain. Residues 55 to 74 (ERELMEFFNVGRPSVREALA) constitute a DNA-binding region (H-T-H motif).

It belongs to the NanR family.

Transcriptional repressor that controls expression of the genes required for the catabolism of sialic acids. In Enterobacter sp. (strain 638), this protein is HTH-type transcriptional repressor NanR.